We begin with the raw amino-acid sequence, 315 residues long: Transaldolase (315 aa).

The Schiff-base intermediate with substrate role is filled by K125.

The protein belongs to the transaldolase family. Type 1 subfamily. As to quaternary structure, homodimer.

Its subcellular location is the cytoplasm. It carries out the reaction D-sedoheptulose 7-phosphate + D-glyceraldehyde 3-phosphate = D-erythrose 4-phosphate + beta-D-fructose 6-phosphate. Its pathway is carbohydrate degradation; pentose phosphate pathway; D-glyceraldehyde 3-phosphate and beta-D-fructose 6-phosphate from D-ribose 5-phosphate and D-xylulose 5-phosphate (non-oxidative stage): step 2/3. Transaldolase is important for the balance of metabolites in the pentose-phosphate pathway. The sequence is that of Transaldolase from Leptothrix cholodnii (strain ATCC 51168 / LMG 8142 / SP-6) (Leptothrix discophora (strain SP-6)).